Here is a 622-residue protein sequence, read N- to C-terminus: Pesticidal crystal protein Cry2Ac (622 aa).

The protein belongs to the delta endotoxin family.

In terms of biological role, promotes colloidosmotic lysis by binding to the midgut epithelial cells of lepidopteran larvae. Has low activity on dipteran larvae. The chain is Pesticidal crystal protein Cry2Ac (cry2Ac) from Bacillus thuringiensis.